Here is a 387-residue protein sequence, read N- to C-terminus: GTPase Obg (387 aa).

The region spanning 1 to 159 is the Obg domain; that stretch reads MKFLDEAKIY…MWVRLEMKLL (159 aa). The 175-residue stretch at 160-334 folds into the OBG-type G domain; that stretch reads ADVGLVGMPN…LVYHVGGMVK (175 aa). GTP is bound by residues 166–173, 191–195, 213–216, 283–286, and 315–317; these read GMPNAGKS, FTTLQ, DIPG, SKAD, and SSA. Residues Ser-173 and Thr-193 each contribute to the Mg(2+) site. The interval 347–379 is disordered; it reads LEDAPTRAGSKALRDEHAPSWQDDDDDDDDDDG. Acidic residues predominate over residues 368–379; it reads QDDDDDDDDDDG.

The protein belongs to the TRAFAC class OBG-HflX-like GTPase superfamily. OBG GTPase family. As to quaternary structure, monomer. Requires Mg(2+) as cofactor.

It is found in the cytoplasm. Functionally, an essential GTPase which binds GTP, GDP and possibly (p)ppGpp with moderate affinity, with high nucleotide exchange rates and a fairly low GTP hydrolysis rate. Plays a role in control of the cell cycle, stress response, ribosome biogenesis and in those bacteria that undergo differentiation, in morphogenesis control. The chain is GTPase Obg from Magnetococcus marinus (strain ATCC BAA-1437 / JCM 17883 / MC-1).